A 376-amino-acid polypeptide reads, in one-letter code: Actin-like protein 53D (376 aa).

A necessary and sufficient for recruitment to the fusome and actin cones of spermatocyte cysts region spans residues 1–40; that stretch reads MSSEVDSNSHHAAVVIDNGSGVCKAGFSPEDTPRAVFPSI.

This sequence belongs to the actin family. ARP1 subfamily. In terms of tissue distribution, high expression in males whereas expression in females is very low. In adult males, highest levels of expression are in the testis. In adult females, expressed only in the ovaries at very low levels. In larvae, highly expressed in the imaginal disk whereas in prepupae and pupae modest levels of expression occur in the fat body.

The protein resides in the cytoplasm. It is found in the cytoskeleton. Functionally, required for optimal embryo development, particularly under heat stress conditions. Also appears to have a role in negatively regulating spermatocyte cyst development. Under heat stress conditions, required for the correct organization and migration of nuclei during early embryogenesis, and therefore possibly functions by regulating embryonic actin networks during the heat stress response. The sequence is that of Actin-like protein 53D from Drosophila melanogaster (Fruit fly).